The chain runs to 213 residues: Urease accessory protein UreG (213 aa).

12-19 (GPVGSGKT) contributes to the GTP binding site.

This sequence belongs to the SIMIBI class G3E GTPase family. UreG subfamily. Homodimer. UreD, UreF and UreG form a complex that acts as a GTP-hydrolysis-dependent molecular chaperone, activating the urease apoprotein by helping to assemble the nickel containing metallocenter of UreC. The UreE protein probably delivers the nickel.

It is found in the cytoplasm. Facilitates the functional incorporation of the urease nickel metallocenter. This process requires GTP hydrolysis, probably effectuated by UreG. The sequence is that of Urease accessory protein UreG from Marinomonas sp. (strain MWYL1).